The following is a 333-amino-acid chain: L-asparagine oxygenase (333 aa).

The L-asparagine site is built by glutamate 125 and asparagine 146. Fe cation-binding residues include histidine 155 and glutamate 157. Positions 157 and 158 each coordinate L-asparagine. Histidine 287 serves as a coordination point for Fe cation. Residue arginine 301 coordinates 2-oxoglutarate. Arginine 305 contributes to the L-asparagine binding site.

Belongs to the clavaminate synthase family. The cofactor is Fe(2+).

It carries out the reaction L-asparagine + 2-oxoglutarate + O2 = (2S,3S)-3-hydroxyasparagine + succinate + CO2. It functions in the pathway antibiotic biosynthesis; calcium-dependent antibiotic biosynthesis. Catalyzes the 3-hydroxylation of L-asparagine to (2S,3S)-3-hydroxyasparagine. The 3-hydroxylated asparagine produced is incorporated at position 9 during the biosynthesis of the non-ribosomally synthesized calcium-dependent antibiotic (CDA), a 11-residue acidic lipopeptide lactone. Is able to hydroxylate only free L-asparagine, since it hydroxylates neither a CDA analog with unmodified Asn at position 9 nor a peptidyl-carrier-protein (PCP)-bound asparagine. Is not active toward D-asparagine. This is L-asparagine oxygenase (asnO) from Streptomyces coelicolor (strain ATCC BAA-471 / A3(2) / M145).